We begin with the raw amino-acid sequence, 369 residues long: Holliday junction branch migration complex subunit RuvB (369 aa).

Residues 1–21 form a disordered region; that stretch reads MHKNENNRLLGSVSLPDDPDR. Residues 1–184 form a large ATPase domain (RuvB-L) region; it reads MHKNENNRLL…FGIPIRLNFY (184 aa). Residues L23, R24, G65, K68, T69, T70, 131–133, R174, Y184, and R221 contribute to the ATP site; that span reads EDY. Residue T69 participates in Mg(2+) binding. Residues 185-255 form a small ATPAse domain (RuvB-S) region; the sequence is TIEELEYIVK…IADTALSRLE (71 aa). The segment at 258–369 is head domain (RuvB-H); that stretch reads HLGLDPLDRN…QKHLWEKDYD (112 aa). The DNA site is built by R294, R313, and R318.

It belongs to the RuvB family. Homohexamer. Forms an RuvA(8)-RuvB(12)-Holliday junction (HJ) complex. HJ DNA is sandwiched between 2 RuvA tetramers; dsDNA enters through RuvA and exits via RuvB. An RuvB hexamer assembles on each DNA strand where it exits the tetramer. Each RuvB hexamer is contacted by two RuvA subunits (via domain III) on 2 adjacent RuvB subunits; this complex drives branch migration. In the full resolvosome a probable DNA-RuvA(4)-RuvB(12)-RuvC(2) complex forms which resolves the HJ.

The protein resides in the cytoplasm. It catalyses the reaction ATP + H2O = ADP + phosphate + H(+). Functionally, the RuvA-RuvB-RuvC complex processes Holliday junction (HJ) DNA during genetic recombination and DNA repair, while the RuvA-RuvB complex plays an important role in the rescue of blocked DNA replication forks via replication fork reversal (RFR). RuvA specifically binds to HJ cruciform DNA, conferring on it an open structure. The RuvB hexamer acts as an ATP-dependent pump, pulling dsDNA into and through the RuvAB complex. RuvB forms 2 homohexamers on either side of HJ DNA bound by 1 or 2 RuvA tetramers; 4 subunits per hexamer contact DNA at a time. Coordinated motions by a converter formed by DNA-disengaged RuvB subunits stimulates ATP hydrolysis and nucleotide exchange. Immobilization of the converter enables RuvB to convert the ATP-contained energy into a lever motion, pulling 2 nucleotides of DNA out of the RuvA tetramer per ATP hydrolyzed, thus driving DNA branch migration. The RuvB motors rotate together with the DNA substrate, which together with the progressing nucleotide cycle form the mechanistic basis for DNA recombination by continuous HJ branch migration. Branch migration allows RuvC to scan DNA until it finds its consensus sequence, where it cleaves and resolves cruciform DNA. The chain is Holliday junction branch migration complex subunit RuvB from Bartonella bacilliformis (strain ATCC 35685 / KC583 / Herrer 020/F12,63).